A 313-amino-acid chain; its full sequence is Porphobilinogen deaminase (313 aa).

An S-(dipyrrolylmethanemethyl)cysteine modification is found at Cys-242.

It belongs to the HMBS family. As to quaternary structure, monomer. The cofactor is dipyrromethane.

It carries out the reaction 4 porphobilinogen + H2O = hydroxymethylbilane + 4 NH4(+). It functions in the pathway porphyrin-containing compound metabolism; protoporphyrin-IX biosynthesis; coproporphyrinogen-III from 5-aminolevulinate: step 2/4. In terms of biological role, tetrapolymerization of the monopyrrole PBG into the hydroxymethylbilane pre-uroporphyrinogen in several discrete steps. This is Porphobilinogen deaminase from Escherichia fergusonii (strain ATCC 35469 / DSM 13698 / CCUG 18766 / IAM 14443 / JCM 21226 / LMG 7866 / NBRC 102419 / NCTC 12128 / CDC 0568-73).